A 217-amino-acid polypeptide reads, in one-letter code: Ras-related protein Rab-19 (217 aa).

GTP contacts are provided by serine 26, valine 28, glycine 29, lysine 30, threonine 31, cysteine 32, tyrosine 42, threonine 43, glutamate 44, threonine 45, and threonine 49. A Mg(2+)-binding site is contributed by threonine 31. The Switch 1 motif lies at 39 to 54 (SGVYTETQQNTIGVDF). Residues threonine 49 and aspartate 72 each coordinate Mg(2+). The short motif at 74 to 89 (AGQERFRTITQSYYRS) is the Switch 2 element. 7 residues coordinate GTP: glycine 75, asparagine 130, lysine 131, aspartate 133, serine 161, alanine 162, and lysine 163. S-geranylgeranyl cysteine attachment occurs at residues cysteine 215 and cysteine 217. Cysteine 217 carries the cysteine methyl ester modification.

Belongs to the small GTPase superfamily. Rab family. The cofactor is Mg(2+).

Its subcellular location is the cell membrane. It catalyses the reaction GTP + H2O = GDP + phosphate + H(+). With respect to regulation, regulated by guanine nucleotide exchange factors (GEFs) which promote the exchange of bound GDP for free GTP. Regulated by GTPase activating proteins (GAPs) which increase the GTP hydrolysis activity. Inhibited by GDP dissociation inhibitors (GDIs). In terms of biological role, the small GTPases Rab are key regulators of intracellular membrane trafficking, from the formation of transport vesicles to their fusion with membranes. Rabs cycle between an inactive GDP-bound form and an active GTP-bound form that is able to recruit to membranes different set of downstream effectors directly responsible for vesicle formation, movement, tethering and fusion. The polypeptide is Ras-related protein Rab-19 (Homo sapiens (Human)).